Consider the following 118-residue polypeptide: Small ribosomal subunit protein uS13 (118 aa).

The disordered stretch occupies residues 94 to 118 (SLPLRGQRTKTNARTRKGPRKPIRK).

This sequence belongs to the universal ribosomal protein uS13 family. In terms of assembly, part of the 30S ribosomal subunit. Forms a loose heterodimer with protein S19. Forms two bridges to the 50S subunit in the 70S ribosome.

Its function is as follows. Located at the top of the head of the 30S subunit, it contacts several helices of the 16S rRNA. In the 70S ribosome it contacts the 23S rRNA (bridge B1a) and protein L5 of the 50S subunit (bridge B1b), connecting the 2 subunits; these bridges are implicated in subunit movement. Contacts the tRNAs in the A and P-sites. The chain is Small ribosomal subunit protein uS13 from Shewanella woodyi (strain ATCC 51908 / MS32).